Consider the following 253-residue polypeptide: HTH-type transcriptional regulator YdeO (253 aa).

Positions 137 to 233 constitute an HTH araC/xylS-type domain; that stretch reads GKVRNIVNMK…GNSPKRVSKE (97 aa). DNA-binding regions (H-T-H motif) lie at residues 154–175 and 200–223; these read KDIC…KQEQ and VNKI…RKHF.

In terms of biological role, induces the expression of gadE and mdtEF. Could also regulate the expression of other genes involved in acid resistance. This Escherichia coli O157:H7 protein is HTH-type transcriptional regulator YdeO.